The chain runs to 1004 residues: Protein CHUP1, chloroplastic (1004 aa).

The segment at 1–25 (MFVRIGFVVAASIAAVTVKRLNVKP) is required for chloroplast localization. Residues 22–63 (NVKPSKPSKPSDNGEGGDKEQSVDPDYNLNDKNLQEEEEEEE) form a disordered region. The stretch at 123–341 (EMAYNDGELE…KQVEGLQMNR (219 aa)) forms a coiled coil. The segment at 269–290 (LEVQVMELKRKNRELQHEKREL) is leucine-zipper 1. Disordered regions lie at residues 398-482 (GSER…SMNK), 504-536 (FGQV…GEGL), 612-718 (TATG…GNKV), and 736-755 (SKKE…SSAA). Phosphoserine is present on serine 399. Residues 409–419 (ESNYSQPSSPG) are compositionally biased toward polar residues. Positions 427-439 (SMDSSTSRFSSFS) are enriched in low complexity. 2 stretches are compositionally biased toward polar residues: residues 504–517 (FGQV…TPET) and 612–624 (TATG…SNES). Positions 670–706 (ARPPLPGGGPPPPPPPPGGGPPPPPGGGPPPPPPPPG) are enriched in pro residues. Residues 744 to 755 (LISSGTGNSSAA) are compositionally biased toward polar residues. A leucine-zipper 2 region spans residues 802–823 (LLAFVSWLDEELSFLVDERAVL). Residues 979-1004 (RSRAKTESGDNNNNNNNNSNEEESVN) form a disordered region.

As to expression, expressed in cauline leaves, rosette leaves, stems and flowers, but not in roots.

Its subcellular location is the plastid. It is found in the chloroplast outer membrane. Its function is as follows. Required for the positioning and movement of chloroplasts. Interacts with profilin and actin independent of its polymerization status. Regulates chloroplast localization by anchoring chloroplasts to the plasma membrane and forming a bridge to the actin cytoskeleton. In Arabidopsis thaliana (Mouse-ear cress), this protein is Protein CHUP1, chloroplastic (CHUP1).